Reading from the N-terminus, the 250-residue chain is Phosphoribosylaminoimidazole-succinocarboxamide synthase (250 aa).

The protein belongs to the SAICAR synthetase family.

The enzyme catalyses 5-amino-1-(5-phospho-D-ribosyl)imidazole-4-carboxylate + L-aspartate + ATP = (2S)-2-[5-amino-1-(5-phospho-beta-D-ribosyl)imidazole-4-carboxamido]succinate + ADP + phosphate + 2 H(+). Its pathway is purine metabolism; IMP biosynthesis via de novo pathway; 5-amino-1-(5-phospho-D-ribosyl)imidazole-4-carboxamide from 5-amino-1-(5-phospho-D-ribosyl)imidazole-4-carboxylate: step 1/2. The sequence is that of Phosphoribosylaminoimidazole-succinocarboxamide synthase from Picosynechococcus sp. (strain ATCC 27264 / PCC 7002 / PR-6) (Agmenellum quadruplicatum).